Here is a 146-residue protein sequence, read N- to C-terminus: MORN repeat-containing protein 4 (146 aa).

4 MORN repeats span residues 16 to 38 (YRGE…DGGT), 39 to 61 (YLGH…DGSR), 62 to 84 (YEGE…DNMT), and 85 to 107 (FEGE…DGSH).

As to quaternary structure, interacts with MYO3A.

It localises to the cytoplasm. The protein resides in the cell projection. It is found in the filopodium tip. The protein localises to the stereocilium. Its function is as follows. Plays a role in promoting axonal degeneration following neuronal injury by toxic insult or trauma. The chain is MORN repeat-containing protein 4 (Morn4) from Mus musculus (Mouse).